The following is a 208-amino-acid chain: uncharacterized protein (208 aa).

This is an uncharacterized protein from Schizosaccharomyces pombe (strain 972 / ATCC 24843) (Fission yeast).